The following is a 1065-amino-acid chain: Ceruloplasmin (1065 aa).

An N-terminal signal peptide occupies residues 1 to 19; it reads MKILILGIFLFLCSTPAWA. Plastocyanin-like domains follow at residues 20–200 and 209–357; these read KEKH…LIIC and KEKH…VQEC. Residues tyrosine 55, glycine 64, and tyrosine 67 each coordinate Na(+). Cu(2+)-binding residues include histidine 120 and histidine 122. Histidine 120 is a binding site for O2. Lysine 128 is a binding site for Ca(2+). An N-linked (GlcNAc...) (complex) asparagine glycan is attached at asparagine 138. Glutamine 143, aspartate 146, and aspartate 147 together coordinate Ca(2+). Residues cysteine 174 and cysteine 200 are joined by a disulfide bond. 2 residues coordinate Cu(2+): histidine 180 and histidine 182. Histidine 180 serves as a coordination point for O2. Serine 256 is a binding site for Na(+). A disulfide bond links cysteine 276 and cysteine 357. Positions 295, 338, and 343 each coordinate Cu(2+). 2 N-linked (GlcNAc...) (complex) asparagine glycosylation sites follow: asparagine 358 and asparagine 397. Plastocyanin-like domains lie at 370-560 and 570-718; these read HVRH…MKIC and RQKD…VNQC. Na(+) contacts are provided by phenylalanine 408, glycine 417, and tyrosine 420. An intrachain disulfide couples cysteine 534 to cysteine 560. Residue asparagine 588 is glycosylated (N-linked (GlcNAc...) asparagine). Serine 617 contributes to the Na(+) binding site. Cysteines 637 and 718 form a disulfide. Histidine 656, cysteine 699, histidine 704, and methionine 709 together coordinate Cu(2+). Cysteine 699 (nucleophile; for glutathione peroxidase activity) is an active-site residue. Serine 722 carries the phosphoserine; by FAM20C modification. Plastocyanin-like domains are found at residues 730 to 900 and 908 to 1061; these read GERT…LIVC and FNPR…QNED. N-linked (GlcNAc...) (complex) asparagine glycosylation occurs at asparagine 762. Na(+) is bound by residues phenylalanine 767, glycine 776, and tyrosine 779. The cysteines at positions 874 and 900 are disulfide-linked. An N-linked (GlcNAc...) asparagine glycan is attached at asparagine 926. A Na(+)-binding site is contributed by serine 955. Positions 994, 997, 999, 1039, 1040, 1041, 1045, and 1050 each coordinate Cu(2+). O2 is bound by residues histidine 997 and histidine 999. Histidine 1041 contributes to the O2 binding site.

It belongs to the multicopper oxidase family. As to quaternary structure, found in a complex with MPO and LTF; interacts directly with MPO and LTF, which allows Fe(3+) incorporation into LTF, activation of CP ferroxidase activity and protection of CP antioxidant properties by MPO. Cu(2+) serves as cofactor. In terms of tissue distribution, expressed by the liver and secreted in plasma.

The protein resides in the secreted. The catalysed reaction is 4 Fe(2+) + O2 + 4 H(+) = 4 Fe(3+) + 2 H2O. The enzyme catalyses 4 Cu(+) + O2 + 4 H(+) = 4 Cu(2+) + 2 H2O. It catalyses the reaction a hydroperoxide + 2 glutathione = an alcohol + glutathione disulfide + H2O. It carries out the reaction 4 nitric oxide + O2 + 2 H2O = 4 nitrite + 4 H(+). The catalysed reaction is 2 glutathione + H2O2 = glutathione disulfide + 2 H2O. Multifunctional blue, copper-binding (6-7 atoms per molecule) glycoprotein. It has ferroxidase activity oxidizing Fe(2+) to Fe(3+) without releasing radical oxygen species. It is involved in iron transport across the cell membrane. Copper ions provide a large number of enzymatic activites. Oxidizes highly toxic ferrous ions to the ferric state for further incorporation onto apo-transferrins, catalyzes Cu(+) oxidation and promotes the oxidation of biogenic amines such as norepinephrin and serotonin. Provides Cu(2+) ions for the ascorbate-mediated deaminase degradation of the heparan sulfate chains of GPC1. Has glutathione peroxidase-like activity, can remove both hydrogen peroxide and lipid hydroperoxide in the presence of thiols. Also shows NO-oxidase and NO2 synthase activities that determine endocrine NO homeostasis. This chain is Ceruloplasmin, found in Homo sapiens (Human).